A 467-amino-acid polypeptide reads, in one-letter code: tRNA-2-methylthio-N(6)-dimethylallyladenosine synthase (467 aa).

The interval 1-20 (MSDDTTQIEPAMAQETSPRA) is disordered. The 121-residue stretch at 23-143 (RKVFVKTYGC…LPNALARVRG (121 aa)) folds into the MTTase N-terminal domain. [4Fe-4S] cluster is bound by residues C32, C68, C106, C184, C188, and C191. The 233-residue stretch at 170–402 (RKRGVSAFLT…QALLSAQQYA (233 aa)) folds into the Radical SAM core domain. One can recognise a TRAM domain in the interval 405–467 (DSMIGRKMDV…TNSLIAQKLA (63 aa)).

The protein belongs to the methylthiotransferase family. MiaB subfamily. As to quaternary structure, monomer. It depends on [4Fe-4S] cluster as a cofactor.

It is found in the cytoplasm. The catalysed reaction is N(6)-dimethylallyladenosine(37) in tRNA + (sulfur carrier)-SH + AH2 + 2 S-adenosyl-L-methionine = 2-methylsulfanyl-N(6)-dimethylallyladenosine(37) in tRNA + (sulfur carrier)-H + 5'-deoxyadenosine + L-methionine + A + S-adenosyl-L-homocysteine + 2 H(+). Catalyzes the methylthiolation of N6-(dimethylallyl)adenosine (i(6)A), leading to the formation of 2-methylthio-N6-(dimethylallyl)adenosine (ms(2)i(6)A) at position 37 in tRNAs that read codons beginning with uridine. In Brucella canis (strain ATCC 23365 / NCTC 10854 / RM-666), this protein is tRNA-2-methylthio-N(6)-dimethylallyladenosine synthase.